Here is a 173-residue protein sequence, read N- to C-terminus: Transcriptional repressor NrdR (173 aa).

The segment at 3 to 34 (CPYCGSLDTQVKDSRPTEDNTAIRRRRVCPDC) is a zinc-finger region. An ATP-cone domain is found at 49 to 139 (LMVVKRSGRR…VYRNFREARD (91 aa)).

The protein belongs to the NrdR family. Requires Zn(2+) as cofactor.

Negatively regulates transcription of bacterial ribonucleotide reductase nrd genes and operons by binding to NrdR-boxes. The polypeptide is Transcriptional repressor NrdR (Azorhizobium caulinodans (strain ATCC 43989 / DSM 5975 / JCM 20966 / LMG 6465 / NBRC 14845 / NCIMB 13405 / ORS 571)).